We begin with the raw amino-acid sequence, 87 residues long: Small ribosomal subunit protein bS20 (87 aa).

Positions 1–22 are disordered; it reads MAHHKSAIKRIKQNAKKNARNR.

It belongs to the bacterial ribosomal protein bS20 family.

Its function is as follows. Binds directly to 16S ribosomal RNA. The sequence is that of Small ribosomal subunit protein bS20 from Pelobacter propionicus (strain DSM 2379 / NBRC 103807 / OttBd1).